Consider the following 196-residue polypeptide: MNEAVSPGALSTLFTDARTHNGWRETPVSDETLREIYALMKWGPTSANCSPARIVFIRTAEGKERLRPALSSGNLQKTLTAPVTAIVAWDSEFYERLPQLFPHGDARSWFTSSPQLAEETAFRNSSMQAAYLIFACRALGLDTGPMSGFDRQYVDDAFFAGSTLKSNLLINIGYGDSSKLFARLPRLSFEEACGLL.

It belongs to the nitroreductase family. HadB/RutE subfamily. It depends on FMN as a cofactor.

It catalyses the reaction 3-hydroxypropanoate + NADP(+) = 3-oxopropanoate + NADPH + H(+). In terms of biological role, may reduce toxic product malonic semialdehyde to 3-hydroxypropionic acid, which is excreted. The sequence is that of Probable malonic semialdehyde reductase RutE from Escherichia coli O45:K1 (strain S88 / ExPEC).